A 178-amino-acid chain; its full sequence is MRIDAISIGKNVPQDVNVIIEVPVGGEPIKYEMDKEAGTLVVDRFLYTPMRYPGNYGFIPHTLSDDGDPCDVLIINTRAIIPGAVMSVRPVGVLFMEDEAGGDEKILAVPSSKLTQRYDKVKSYSDLPDITLQQIQHFFEHYKDLEKGKWVKILRWGGPEDAHKLILEGIEREKKKKG.

Substrate is bound by residues lysine 30, arginine 44, and tyrosine 56. Mg(2+) is bound by residues aspartate 66, aspartate 71, and aspartate 103. Tyrosine 142 is a substrate binding site.

Belongs to the PPase family. In terms of assembly, homohexamer. The cofactor is Mg(2+).

It localises to the cytoplasm. It catalyses the reaction diphosphate + H2O = 2 phosphate + H(+). Its function is as follows. Catalyzes the hydrolysis of inorganic pyrophosphate (PPi) forming two phosphate ions. The polypeptide is Inorganic pyrophosphatase (Bradyrhizobium diazoefficiens (strain JCM 10833 / BCRC 13528 / IAM 13628 / NBRC 14792 / USDA 110)).